Here is a 56-residue protein sequence, read N- to C-terminus: Small ribosomal subunit protein uS14 (56 aa).

At Ser9 the chain carries Phosphoserine. Omega-N-methylarginine is present on Arg12. Positions 21, 24, 39, and 42 each coordinate Zn(2+). Lys48 is subject to N6-acetyllysine.

The protein belongs to the universal ribosomal protein uS14 family. As to quaternary structure, component of the 40S small ribosomal subunit. Zn(2+) serves as cofactor.

Its subcellular location is the cytoplasm. The protein localises to the cytosol. It localises to the rough endoplasmic reticulum. Functionally, component of the small ribosomal subunit. The ribosome is a large ribonucleoprotein complex responsible for the synthesis of proteins in the cell. The chain is Small ribosomal subunit protein uS14 (Rps29) from Mus musculus (Mouse).